Here is a 420-residue protein sequence, read N- to C-terminus: Histidine--tRNA ligase (420 aa).

This sequence belongs to the class-II aminoacyl-tRNA synthetase family. In terms of assembly, homodimer.

The protein resides in the cytoplasm. The catalysed reaction is tRNA(His) + L-histidine + ATP = L-histidyl-tRNA(His) + AMP + diphosphate + H(+). In Macrococcus caseolyticus (strain JCSC5402) (Macrococcoides caseolyticum), this protein is Histidine--tRNA ligase.